Here is a 547-residue protein sequence, read N- to C-terminus: CTP synthase (547 aa).

Residues M1–I265 are amidoligase domain. Position 13 (S13) interacts with CTP. Position 13 (S13) interacts with UTP. Residues S14–I19 and D71 contribute to the ATP site. Mg(2+) contacts are provided by D71 and E139. Residues D146–E148, K186–Q191, and K222 contribute to the CTP site. Residues K186–Q191 and K222 contribute to the UTP site. In terms of domain architecture, Glutamine amidotransferase type-1 spans T290 to K541. G351 is an L-glutamine binding site. The active-site Nucleophile; for glutamine hydrolysis is the C378. L-glutamine is bound by residues L379–Q382, E402, and R469. Residues H514 and E516 contribute to the active site.

This sequence belongs to the CTP synthase family. As to quaternary structure, homotetramer.

It catalyses the reaction UTP + L-glutamine + ATP + H2O = CTP + L-glutamate + ADP + phosphate + 2 H(+). It carries out the reaction L-glutamine + H2O = L-glutamate + NH4(+). The catalysed reaction is UTP + NH4(+) + ATP = CTP + ADP + phosphate + 2 H(+). The protein operates within pyrimidine metabolism; CTP biosynthesis via de novo pathway; CTP from UDP: step 2/2. With respect to regulation, allosterically activated by GTP, when glutamine is the substrate; GTP has no effect on the reaction when ammonia is the substrate. The allosteric effector GTP functions by stabilizing the protein conformation that binds the tetrahedral intermediate(s) formed during glutamine hydrolysis. Inhibited by the product CTP, via allosteric rather than competitive inhibition. Catalyzes the ATP-dependent amination of UTP to CTP with either L-glutamine or ammonia as the source of nitrogen. Regulates intracellular CTP levels through interactions with the four ribonucleotide triphosphates. In Thioalkalivibrio sulfidiphilus (strain HL-EbGR7), this protein is CTP synthase.